The chain runs to 171 residues: Co-chaperone protein HscB homolog (171 aa).

The 73-residue stretch at 2 to 74 (NHFELFGLPS…ISRAEYILAE (73 aa)) folds into the J domain.

The protein belongs to the HscB family. In terms of assembly, interacts with HscA and stimulates its ATPase activity.

Its function is as follows. Co-chaperone involved in the maturation of iron-sulfur cluster-containing proteins. Seems to help targeting proteins to be folded toward HscA. The chain is Co-chaperone protein HscB homolog from Vibrio campbellii (strain ATCC BAA-1116).